Consider the following 91-residue polypeptide: Conotoxin VnMKLT1-021 (91 aa).

An N-terminal signal peptide occupies residues 1–22; the sequence is MKLTCVMIVAVLFLTAWTFVTA. Positions 23 to 57 are excised as a propeptide; that stretch reads DDPRDGPDTAVGWRKLFSEARDEMKNREASKLNER. Disulfide bonds link Cys59-Cys78, Cys66-Cys82, and Cys77-Cys86.

The protein belongs to the conotoxin O1 superfamily. In terms of tissue distribution, expressed by the venom duct.

It is found in the secreted. The protein is Conotoxin VnMKLT1-021 of Conus ventricosus (Mediterranean cone).